The following is a 163-amino-acid chain: MNSSFSHLDGQGNVTMVDVGGKQATERVAIAEAVVELRPATLELLLKVALPKGDVLTCAKIGGIMAAKRVGEIIPLCHPLSLTYADIRFEVSEAPPRIRIEAETRTVGNTGVEMEAIVAAQTAAAVIYDMCKAVQRDIIISRVRLLHKRGGKSGEFNAPDMEE.

Residues 76–78 (LCH) and 114–115 (ME) contribute to the substrate site. The active site involves D129.

It belongs to the MoaC family. As to quaternary structure, homohexamer; trimer of dimers.

The enzyme catalyses (8S)-3',8-cyclo-7,8-dihydroguanosine 5'-triphosphate = cyclic pyranopterin phosphate + diphosphate. Its pathway is cofactor biosynthesis; molybdopterin biosynthesis. Catalyzes the conversion of (8S)-3',8-cyclo-7,8-dihydroguanosine 5'-triphosphate to cyclic pyranopterin monophosphate (cPMP). The sequence is that of Cyclic pyranopterin monophosphate synthase from Desulfovibrio desulfuricans (strain ATCC 27774 / DSM 6949 / MB).